Consider the following 335-residue polypeptide: Probable tRNA N6-adenosine threonylcarbamoyltransferase (335 aa).

The a divalent metal cation site is built by His109, His113, and Tyr130. Substrate-binding positions include 130–134 (YVSGG), Asp162, Gly177, Glu181, and Asn266. Position 294 (Asp294) interacts with a divalent metal cation.

This sequence belongs to the KAE1 / TsaD family. In terms of assembly, component of the EKC/KEOPS complex; the whole complex dimerizes. A divalent metal cation serves as cofactor.

It is found in the cytoplasm. The protein resides in the nucleus. It carries out the reaction L-threonylcarbamoyladenylate + adenosine(37) in tRNA = N(6)-L-threonylcarbamoyladenosine(37) in tRNA + AMP + H(+). Component of the EKC/KEOPS complex that is required for the formation of a threonylcarbamoyl group on adenosine at position 37 (t(6)A37) in tRNAs that read codons beginning with adenine. The complex is probably involved in the transfer of the threonylcarbamoyl moiety of threonylcarbamoyl-AMP (TC-AMP) to the N6 group of A37. Osgep likely plays a direct catalytic role in this reaction, but requires other protein(s) of the complex to fulfill this activity. This is Probable tRNA N6-adenosine threonylcarbamoyltransferase from Nematostella vectensis (Starlet sea anemone).